A 278-amino-acid chain; its full sequence is HTH-type transcriptional activator RhaS (278 aa).

Residues asparagine 174–glycine 272 enclose the HTH araC/xylS-type domain. 2 DNA-binding regions (H-T-H motif) span residues aspartate 191–threonine 212 and valine 239–phenylalanine 262.

In terms of assembly, binds DNA as a dimer.

It localises to the cytoplasm. Its function is as follows. Activates expression of the rhaBAD and rhaT operons. This chain is HTH-type transcriptional activator RhaS, found in Escherichia coli O81 (strain ED1a).